The sequence spans 539 residues: MDTEYQSFVETLRAGQKPEFPAHAKTIEYARELDAHDKLSQLRSDFNIPTKGSLRKKALDGGVAGETKEPRVPNGVSSATKPNGTVNSDLKDDEASIYFVGNSLGAQPKCIRQYIDAHLETWASIGVNGHFTSFDNSPLASWQDMAAACAAQSVDLVGAKSANEIIYMNTLTVNLHLMMASFYRPTAKRHKIIAEWKPFPSDSYALASQLHWHGLAPATSLIEIHPPNPTGSSPPTLTLTTSHILATIDAHADSTALLLLPGIQYYTGQLFDMARITRHARARGIVVGWDLAHAVGNVELELHAWGVDFAVWCTYKYLNAGPGALGGVFVHGRHHSFHRGGGGSGGVGGGRGEGGDGDGGDGGDGDGMALGYRHRLAGWYGADKAVRFEMEKVFWPAEGAAGWQVSNPSVVDLACVRATLGMFERVGMRALRDKAVLLTGYLEWLLLGLLADGVGKGGDGEAAFRIITPGHPADRGSQLSLLLRGGLLEGVSKELADGGVVVDVRKPDVIRVAPVPMYCRFEDVWGFITVFNRALDRCA.

The disordered stretch occupies residues 60 to 87 (DGGVAGETKEPRVPNGVSSATKPNGTVN). The span at 75 to 87 (GVSSATKPNGTVN) shows a compositional bias: polar residues. Residues Leu-171, Thr-172, 199-202 (FPSD), Asp-290, His-293, and Tyr-315 each bind pyridoxal 5'-phosphate. Lys-316 bears the N6-(pyridoxal phosphate)lysine mark. The segment covering 340 to 352 (GGGGSGGVGGGRG) has biased composition (gly residues). A disordered region spans residues 340 to 363 (GGGGSGGVGGGRGEGGDGDGGDGG). 2 residues coordinate pyridoxal 5'-phosphate: Trp-379 and Asn-407.

This sequence belongs to the kynureninase family. As to quaternary structure, homodimer. Pyridoxal 5'-phosphate serves as cofactor.

The protein localises to the cytoplasm. The enzyme catalyses L-kynurenine + H2O = anthranilate + L-alanine + H(+). The catalysed reaction is 3-hydroxy-L-kynurenine + H2O = 3-hydroxyanthranilate + L-alanine + H(+). The protein operates within amino-acid degradation; L-kynurenine degradation; L-alanine and anthranilate from L-kynurenine: step 1/1. It participates in cofactor biosynthesis; NAD(+) biosynthesis; quinolinate from L-kynurenine: step 2/3. Catalyzes the cleavage of L-kynurenine (L-Kyn) and L-3-hydroxykynurenine (L-3OHKyn) into anthranilic acid (AA) and 3-hydroxyanthranilic acid (3-OHAA), respectively. This is Kynureninase 2 from Chaetomium globosum (strain ATCC 6205 / CBS 148.51 / DSM 1962 / NBRC 6347 / NRRL 1970) (Soil fungus).